We begin with the raw amino-acid sequence, 259 residues long: Indole-3-glycerol phosphate synthase (259 aa).

The protein belongs to the TrpC family.

The catalysed reaction is 1-(2-carboxyphenylamino)-1-deoxy-D-ribulose 5-phosphate + H(+) = (1S,2R)-1-C-(indol-3-yl)glycerol 3-phosphate + CO2 + H2O. Its pathway is amino-acid biosynthesis; L-tryptophan biosynthesis; L-tryptophan from chorismate: step 4/5. The polypeptide is Indole-3-glycerol phosphate synthase (Dehalococcoides mccartyi (strain ATCC BAA-2266 / KCTC 15142 / 195) (Dehalococcoides ethenogenes (strain 195))).